Reading from the N-terminus, the 353-residue chain is Photosystem II protein D1 (353 aa).

Threonine 2 is subject to N-acetylthreonine. At threonine 2 the chain carries Phosphothreonine. Helical transmembrane passes span 29–46, 118–133, and 142–156; these read YIGWFGVLMIPLLLTATS, HFLLGVCCYMGREWEL, and WIAVAYSAPVAAATA. Histidine 118 is a chlorophyll a binding site. Tyrosine 126 provides a ligand contact to pheophytin a. [CaMn4O5] cluster contacts are provided by aspartate 170 and glutamate 189. The chain crosses the membrane as a helical span at residues 197–218; sequence FHMLGVAGVFGGSLFSAMHGSL. Position 198 (histidine 198) interacts with chlorophyll a. Residues histidine 215 and 264-265 contribute to the a quinone site; that span reads SF. Position 215 (histidine 215) interacts with Fe cation. Histidine 272 is a binding site for Fe cation. A helical transmembrane segment spans residues 274–288; that stretch reads FLAAWPVIGIWFTAL. Residues histidine 332, glutamate 333, aspartate 342, and alanine 344 each coordinate [CaMn4O5] cluster. Residues 345–353 constitute a propeptide that is removed on maturation; sequence SVEAPSVNG.

Belongs to the reaction center PufL/M/PsbA/D family. PSII is composed of 1 copy each of membrane proteins PsbA, PsbB, PsbC, PsbD, PsbE, PsbF, PsbH, PsbI, PsbJ, PsbK, PsbL, PsbM, PsbT, PsbX, PsbY, PsbZ, Psb30/Ycf12, at least 3 peripheral proteins of the oxygen-evolving complex and a large number of cofactors. It forms dimeric complexes. The D1/D2 heterodimer binds P680, chlorophylls that are the primary electron donor of PSII, and subsequent electron acceptors. It shares a non-heme iron and each subunit binds pheophytin, quinone, additional chlorophylls, carotenoids and lipids. D1 provides most of the ligands for the Mn4-Ca-O5 cluster of the oxygen-evolving complex (OEC). There is also a Cl(-1) ion associated with D1 and D2, which is required for oxygen evolution. The PSII complex binds additional chlorophylls, carotenoids and specific lipids. serves as cofactor. Post-translationally, tyr-161 forms a radical intermediate that is referred to as redox-active TyrZ, YZ or Y-Z. C-terminally processed by CTPA; processing is essential to allow assembly of the oxygen-evolving complex and thus photosynthetic growth.

It is found in the plastid. The protein resides in the chloroplast thylakoid membrane. The catalysed reaction is 2 a plastoquinone + 4 hnu + 2 H2O = 2 a plastoquinol + O2. In terms of biological role, photosystem II (PSII) is a light-driven water:plastoquinone oxidoreductase that uses light energy to abstract electrons from H(2)O, generating O(2) and a proton gradient subsequently used for ATP formation. It consists of a core antenna complex that captures photons, and an electron transfer chain that converts photonic excitation into a charge separation. The D1/D2 (PsbA/PsbD) reaction center heterodimer binds P680, the primary electron donor of PSII as well as several subsequent electron acceptors. This is Photosystem II protein D1 from Chlorokybus atmophyticus (Soil alga).